A 185-amino-acid polypeptide reads, in one-letter code: MNGIAWMIVFCEIAFWVVIVLGLAVRYVFKRHTLGLLFLALTPVIDLILLAATGVDLYRGASATAAHGIAAVYIGISIAYGKQMIQWADEKFQYYVTKKGTKPLKRFGMDHAKHGAKGWLRHVLAYLIGAGLLAGMIYFINDSSRTEALSGILKLWTVIIGIDFLITASYFIWPKKEKASANLRS.

The next 5 membrane-spanning stretches (helical) occupy residues 4 to 24 (IAWM…LGLA), 35 to 55 (GLLF…ATGV), 60 to 80 (GASA…SIAY), 123 to 143 (VLAY…INDS), and 152 to 172 (ILKL…SYFI).

It localises to the cell membrane. This is an uncharacterized protein from Bacillus subtilis (strain 168).